The chain runs to 147 residues: Large ribosomal subunit protein uL15 (147 aa).

Over residues Met1–Arg20 the composition is skewed to basic and acidic residues. A disordered region spans residues Met1–Gln61. Positions Arg23–Ala33 are enriched in gly residues. Over residues Gly34–Gly47 the composition is skewed to basic residues.

This sequence belongs to the universal ribosomal protein uL15 family. Part of the 50S ribosomal subunit.

In terms of biological role, binds to the 23S rRNA. The chain is Large ribosomal subunit protein uL15 from Xanthomonas axonopodis pv. citri (strain 306).